The chain runs to 297 residues: Bifunctional protein FolD (297 aa).

NADP(+)-binding positions include 166 to 168 (GRS), serine 191, and isoleucine 232.

Belongs to the tetrahydrofolate dehydrogenase/cyclohydrolase family. In terms of assembly, homodimer.

It catalyses the reaction (6R)-5,10-methylene-5,6,7,8-tetrahydrofolate + NADP(+) = (6R)-5,10-methenyltetrahydrofolate + NADPH. The catalysed reaction is (6R)-5,10-methenyltetrahydrofolate + H2O = (6R)-10-formyltetrahydrofolate + H(+). It functions in the pathway one-carbon metabolism; tetrahydrofolate interconversion. Its function is as follows. Catalyzes the oxidation of 5,10-methylenetetrahydrofolate to 5,10-methenyltetrahydrofolate and then the hydrolysis of 5,10-methenyltetrahydrofolate to 10-formyltetrahydrofolate. This chain is Bifunctional protein FolD, found in Phenylobacterium zucineum (strain HLK1).